We begin with the raw amino-acid sequence, 334 residues long: Tyrosine-protein kinase SRK3 (334 aa).

In terms of domain architecture, SH2 spans 1–42; it reads IRTLDDGGFYMANRISFPTLQNLVSHYMMDADGLAQRLSRPC. The 256-residue stretch at 66-321 folds into the Protein kinase domain; it reads IQLQRKLGQG…LKNLLEDYYV (256 aa). Residues 72-80 and Lys94 contribute to the ATP site; that span reads LGQGNFGEV. Asp186 serves as the catalytic Proton acceptor.

Belongs to the protein kinase superfamily. Tyr protein kinase family.

It is found in the cytoplasm. It carries out the reaction L-tyrosyl-[protein] + ATP = O-phospho-L-tyrosyl-[protein] + ADP + H(+). In Spongilla lacustris (Freshwater sponge), this protein is Tyrosine-protein kinase SRK3 (SRK3).